A 294-amino-acid polypeptide reads, in one-letter code: Zinc finger protein 346 (294 aa).

N-acetylmethionine is present on methionine 1. Positions 1–19 (MECPAPDATDAADPGEAGP) are enriched in low complexity. Residues 1–35 (MECPAPDATDAADPGEAGPYKGSEEPEGREPDGVR) are disordered. Positions 22 to 35 (GSEEPEGREPDGVR) are enriched in basic and acidic residues. A Matrin-type 1 zinc finger spans residues 70–104 (FTSTQCKVCCAMLISESQKLAHYQSKKHANKVKRY). Zn(2+) is bound by residues cysteine 75, cysteine 78, histidine 91, and histidine 97. Lysine 114 is covalently cross-linked (Glycyl lysine isopeptide (Lys-Gly) (interchain with G-Cter in SUMO2)). The Matrin-type 2 zinc-finger motif lies at 131–165 (DKNHCCPICNMTFSSPAVAQSHYLGKTHAKSLKLK). Cysteine 136, cysteine 139, histidine 152, and histidine 158 together coordinate Zn(2+). Lysine 170 is covalently cross-linked (Glycyl lysine isopeptide (Lys-Gly) (interchain with G-Cter in SUMO2)). 2 consecutive Matrin-type zinc fingers follow at residues 182–216 (DPDKFCSLCHSTFNDPAMAQQHYMGKRHRKQETKL) and 236–270 (GKGYPCKTCKIVLNSIEQYQAHVSGFKHKNQSPKT). Positions 269–294 (KTLVTLGSQTPVQTQPTPKDSSTVQD) are disordered.

Forms a heteromeric complex with XPO5 and ILF3. Found in a nuclear export complex with XPO5, RAN, ILF3, ZNF346 and double-stranded RNA. Interacts with XPO5. Interacts with ILF3 in an RNA-independent manner. Expressed in all tissues tested, including heart, brain, spleen, lung, liver, muscle, kidney and testis. Exogenous expression induced apoptosis.

The protein resides in the nucleus. It localises to the nucleolus. The protein localises to the cytoplasm. Its function is as follows. Binds with low affinity to dsDNA and ssRNA, and with high affinity to dsRNA, with no detectable sequence specificity. May bind to specific miRNA hairpins. This chain is Zinc finger protein 346 (Znf346), found in Mus musculus (Mouse).